A 332-amino-acid chain; its full sequence is 2,3-diketo-L-gulonate reductase (332 aa).

H44 serves as the catalytic Proton donor. NAD(+) contacts are provided by residues 168-174 (ITMVDMS), 224-225 (WK), and 304-306 (GHE).

It belongs to the LDH2/MDH2 oxidoreductase family. DlgD subfamily. As to quaternary structure, homodimer.

The protein localises to the cytoplasm. It catalyses the reaction 3-dehydro-L-gulonate + NAD(+) = 2,3-dioxo-L-gulonate + NADH + H(+). It carries out the reaction 3-dehydro-L-gulonate + NADP(+) = 2,3-dioxo-L-gulonate + NADPH + H(+). Functionally, catalyzes the reduction of 2,3-diketo-L-gulonate in the presence of NADH, to form 3-keto-L-gulonate. The polypeptide is 2,3-diketo-L-gulonate reductase (Escherichia coli O8 (strain IAI1)).